The following is a 729-amino-acid chain: Rab-like protein 6 (729 aa).

At Met1 the chain carries N-acetylmethionine. The interval 39-279 (GVQYNMKIVI…IFLEMMEARS (241 aa)) is small GTPase-like. Residues 50-57 (GDRNTGKT), 100-104 (DVVDK), and 177-179 (YRD) contribute to the GTP site. The segment at 281 to 729 (GHASPLAANG…HPGGGDYEEL (449 aa)) is disordered. The span at 290 to 315 (GQSPSPGSQSPVVPAGAVSTGSSSPG) shows a compositional bias: low complexity. The span at 331–351 (SSVPPVPPSEALPPPACPSAP) shows a compositional bias: pro residues. The segment covering 395–416 (PDDRLDRSFLEDTTPARDEKKV) has biased composition (basic and acidic residues). Phosphoserine occurs at positions 402, 425, 427, 470, 471, 492, 525, and 577. Residues 489–502 (QQCSEPETKWSSIP) show a composition bias toward polar residues. The span at 581 to 595 (DTQRRADDFPVRDDP) shows a compositional bias: basic and acidic residues. Ser596 is subject to Phosphoserine. The segment covering 596 to 605 (SDVTDEDEGP) has biased composition (acidic residues). Thr599 bears the Phosphothreonine mark. The segment covering 606-615 (AEPPPPPKLP) has biased composition (pro residues). Residues 635-652 (AGPKESSEEGKEGKTPSK) are compositionally biased toward basic and acidic residues. Residues Ser640 and Ser641 each carry the phosphoserine modification. Positions 655-693 (KKKKKKGKEEEEKAAKKKSKHKKSKDKEEGKEERRRRQQ) are interaction with CDKN2A. Residues 669 to 678 (AKKKSKHKKS) are compositionally biased toward basic residues. A compositionally biased stretch (basic and acidic residues) spans 679–689 (KDKEEGKEERR). Residues 711–729 (LGGGAPGGRHPGGGDYEEL) are compositionally biased toward gly residues.

It belongs to the small GTPase superfamily. Rab family. Post-translationally, isoform 1 is O-glycosylated, while other isoforms are not.

It localises to the cytoplasm. The protein resides in the nucleus. Its function is as follows. May enhance cellular proliferation. May reduce growth inhibitory activity of CDKN2A. The chain is Rab-like protein 6 (RABL6) from Homo sapiens (Human).